The primary structure comprises 465 residues: Cysteine--tRNA ligase (465 aa).

Cys27 provides a ligand contact to Zn(2+). The 'HIGH' region motif lies at 29–39; sequence PTVYDDAHLGH. Residues Cys207, His237, and Glu241 each coordinate Zn(2+). Positions 269–273 match the 'KMSKS' region motif; it reads KMSKS. Lys272 lines the ATP pocket.

The protein belongs to the class-I aminoacyl-tRNA synthetase family. As to quaternary structure, monomer. Requires Zn(2+) as cofactor.

The protein localises to the cytoplasm. The enzyme catalyses tRNA(Cys) + L-cysteine + ATP = L-cysteinyl-tRNA(Cys) + AMP + diphosphate. The sequence is that of Cysteine--tRNA ligase from Nitratiruptor sp. (strain SB155-2).